The primary structure comprises 175 residues: 3-hydroxydecanoyl-[acyl-carrier-protein] dehydratase (175 aa).

H74 is a catalytic residue.

This sequence belongs to the thioester dehydratase family. FabA subfamily. As to quaternary structure, homodimer.

The protein localises to the cytoplasm. The enzyme catalyses a (3R)-hydroxyacyl-[ACP] = a (2E)-enoyl-[ACP] + H2O. It carries out the reaction (3R)-hydroxydecanoyl-[ACP] = (2E)-decenoyl-[ACP] + H2O. It catalyses the reaction (2E)-decenoyl-[ACP] = (3Z)-decenoyl-[ACP]. The protein operates within lipid metabolism; fatty acid biosynthesis. Its function is as follows. Necessary for the introduction of cis unsaturation into fatty acids. Catalyzes the dehydration of (3R)-3-hydroxydecanoyl-ACP to E-(2)-decenoyl-ACP and then its isomerization to Z-(3)-decenoyl-ACP. Can catalyze the dehydratase reaction for beta-hydroxyacyl-ACPs with saturated chain lengths up to 16:0, being most active on intermediate chain length. The chain is 3-hydroxydecanoyl-[acyl-carrier-protein] dehydratase from Alcanivorax borkumensis (strain ATCC 700651 / DSM 11573 / NCIMB 13689 / SK2).